The chain runs to 556 residues: Dihydroxy-acid dehydratase (556 aa).

Residue Asp-78 participates in Mg(2+) binding. Cys-119 lines the [2Fe-2S] cluster pocket. Residues Asp-120 and Lys-121 each contribute to the Mg(2+) site. An N6-carboxylysine modification is found at Lys-121. Residue Cys-195 coordinates [2Fe-2S] cluster. Glu-446 serves as a coordination point for Mg(2+). The Proton acceptor role is filled by Ser-472.

The protein belongs to the IlvD/Edd family. Homodimer. [2Fe-2S] cluster is required as a cofactor. Mg(2+) serves as cofactor.

It catalyses the reaction (2R)-2,3-dihydroxy-3-methylbutanoate = 3-methyl-2-oxobutanoate + H2O. The catalysed reaction is (2R,3R)-2,3-dihydroxy-3-methylpentanoate = (S)-3-methyl-2-oxopentanoate + H2O. The protein operates within amino-acid biosynthesis; L-isoleucine biosynthesis; L-isoleucine from 2-oxobutanoate: step 3/4. It functions in the pathway amino-acid biosynthesis; L-valine biosynthesis; L-valine from pyruvate: step 3/4. Functions in the biosynthesis of branched-chain amino acids. Catalyzes the dehydration of (2R,3R)-2,3-dihydroxy-3-methylpentanoate (2,3-dihydroxy-3-methylvalerate) into 2-oxo-3-methylpentanoate (2-oxo-3-methylvalerate) and of (2R)-2,3-dihydroxy-3-methylbutanoate (2,3-dihydroxyisovalerate) into 2-oxo-3-methylbutanoate (2-oxoisovalerate), the penultimate precursor to L-isoleucine and L-valine, respectively. The chain is Dihydroxy-acid dehydratase from Desulfatibacillum aliphaticivorans.